Reading from the N-terminus, the 359-residue chain is sn-1 acyl-lipid omega-3 desaturase (ferredoxin) (359 aa).

Positions 1 to 15 (MQLDTISFNNPLNSE) are enriched in polar residues. The disordered stretch occupies residues 1–20 (MQLDTISFNNPLNSETSEDT). 2 consecutive transmembrane segments (helical) span residues 47-67 (LFYFFRDILIIGLLYAVASYL) and 70-90 (WLFFPIFWLMQGTMFWALFVV). The Histidine box-1 motif lies at 92-96 (HDCGH). Residues 128–132 (HRTHH) carry the Histidine box-2 motif. The next 2 helical transmembrane spans lie at 207–227 (VLLIGMVGLLGFLTYQWGWMW) and 228–248 (LLKYYAVPYLVFIVWLDLVTF). The Histidine box-3 signature appears at 294-298 (HHIFL).

The protein belongs to the fatty acid desaturase type 2 family. It depends on Fe(2+) as a cofactor.

Its subcellular location is the membrane. The catalysed reaction is a 1-[(9Z,12Z)-octadecdienoyl]-2-acyl-glycerolipid + 2 reduced [2Fe-2S]-[ferredoxin] + O2 + 2 H(+) = a 1-[(9Z,12Z,15Z)-octadectrienoyl]-2-acyl-glycerolipid + 2 oxidized [2Fe-2S]-[ferredoxin] + 2 H2O. The enzyme catalyses a 1-[(6Z,9Z,12Z)-octadectrienoyl]-2-acyl-glycerolipid + 2 reduced [2Fe-2S]-[ferredoxin] + O2 + 2 H(+) = a 1-[(6Z,9Z,12Z,15Z)-octadectetraenoyl]-2-acyl-glycerolipid + 2 oxidized [2Fe-2S]-[ferredoxin] + 2 H2O. The protein operates within lipid metabolism; polyunsaturated fatty acid biosynthesis. In terms of biological role, desaturase involved in fatty acid biosynthesis. Introduces a double bond at carbon 15 of linoleoyl and gamma-linolenoyl groups attached to the sn-1 position of the glycerol moiety of membrane glycerolipids. The protein is sn-1 acyl-lipid omega-3 desaturase (ferredoxin) of Nostoc sp. (strain 36).